Consider the following 152-residue polypeptide: Acidic phospholipase A2 S16-19 (152 aa).

A signal peptide spans 1 to 19 (MYPAHLLVLLAVCVSLLGA). A propeptide spanning residues 20–27 (SNIPLPSL) is cleaved from the precursor. Intrachain disulfides connect Cys38–Cys104, Cys54–Cys151, Cys71–Cys132, Cys78–Cys125, Cys88–Cys118, and Cys111–Cys123. Residues Tyr55, Gly57, and Gly59 each coordinate Ca(2+). His75 is an active-site residue. Position 76 (Asp76) interacts with Ca(2+). Asp126 is a catalytic residue.

The protein belongs to the phospholipase A2 family. Group I subfamily. D49 sub-subfamily. Requires Ca(2+) as cofactor. In terms of processing, this enzyme lacks one of the seven disulfide bonds found in similar PLA2 proteins. In terms of tissue distribution, expressed by the venom gland.

The protein localises to the secreted. It carries out the reaction a 1,2-diacyl-sn-glycero-3-phosphocholine + H2O = a 1-acyl-sn-glycero-3-phosphocholine + a fatty acid + H(+). Its function is as follows. Snake venom phospholipase A2 (PLA2) that inhibits collagen-induced platelet aggregation. PLA2 catalyzes the calcium-dependent hydrolysis of the 2-acyl groups in 3-sn-phosphoglycerides. The polypeptide is Acidic phospholipase A2 S16-19 (Austrelaps superbus (Lowland copperhead snake)).